A 232-amino-acid chain; its full sequence is Small ribosomal subunit protein uS2 (232 aa).

The protein belongs to the universal ribosomal protein uS2 family.

This is Small ribosomal subunit protein uS2 from Baumannia cicadellinicola subsp. Homalodisca coagulata.